Here is a 487-residue protein sequence, read N- to C-terminus: Betaine aldehyde dehydrogenase (487 aa).

2 residues coordinate K(+): serine 26 and aspartate 93. 150 to 152 (GAW) provides a ligand contact to NAD(+). The active-site Charge relay system is lysine 162. NAD(+) is bound by residues 176–179 (KPSE) and 229–232 (SVPT). Leucine 244 is a binding site for K(+). The Proton acceptor role is filled by glutamate 250. Residues glycine 252, cysteine 284, and glutamate 384 each contribute to the NAD(+) site. The active-site Nucleophile is the cysteine 284. Cysteine sulfenic acid (-SOH) is present on cysteine 284. 2 residues coordinate K(+): lysine 454 and glycine 457. The active-site Charge relay system is glutamate 461.

It belongs to the aldehyde dehydrogenase family. Dimer of dimers. The cofactor is K(+).

The enzyme catalyses betaine aldehyde + NAD(+) + H2O = glycine betaine + NADH + 2 H(+). It functions in the pathway amine and polyamine biosynthesis; betaine biosynthesis via choline pathway; betaine from betaine aldehyde: step 1/1. Involved in the biosynthesis of the osmoprotectant glycine betaine. Catalyzes the irreversible oxidation of betaine aldehyde to the corresponding acid. The chain is Betaine aldehyde dehydrogenase from Rhizobium etli (strain ATCC 51251 / DSM 11541 / JCM 21823 / NBRC 15573 / CFN 42).